The sequence spans 68 residues: Small ribosomal subunit protein bS21 (68 aa).

A disordered region spans residues 39 to 68; sequence PPSVKRVRKKQESERRHRKERAMRRRMMEE. Residues 54 to 68 are compositionally biased toward basic residues; sequence RHRKERAMRRRMMEE.

This sequence belongs to the bacterial ribosomal protein bS21 family.

This chain is Small ribosomal subunit protein bS21, found in Orientia tsutsugamushi (strain Ikeda) (Rickettsia tsutsugamushi).